Consider the following 209-residue polypeptide: Thymidylate kinase (209 aa).

10–17 (GLDGAGKS) is a binding site for ATP.

It belongs to the thymidylate kinase family.

The catalysed reaction is dTMP + ATP = dTDP + ADP. Its function is as follows. Phosphorylation of dTMP to form dTDP in both de novo and salvage pathways of dTTP synthesis. This chain is Thymidylate kinase, found in Francisella tularensis subsp. holarctica (strain OSU18).